The following is a 1006-amino-acid chain: UPF0182 protein Arth_2749 (1006 aa).

The next 7 helical transmembrane spans lie at glycine 18–alanine 38, isoleucine 64–isoleucine 84, valine 115–glutamine 135, phenylalanine 168–isoleucine 188, glutamine 211–leucine 231, serine 260–glycine 280, and isoleucine 287–isoleucine 307. Disordered stretches follow at residues glycine 490–asparagine 519, lysine 896–aspartate 923, and leucine 975–asparagine 1006. The segment covering serine 495–aspartate 509 has biased composition (basic and acidic residues). 2 stretches are compositionally biased toward low complexity: residues alanine 911 to aspartate 923 and glycine 979 to proline 1000.

The protein belongs to the UPF0182 family.

Its subcellular location is the cell membrane. This chain is UPF0182 protein Arth_2749, found in Arthrobacter sp. (strain FB24).